An 84-amino-acid chain; its full sequence is Small ribosomal subunit protein bS18A (84 aa).

Belongs to the bacterial ribosomal protein bS18 family. In terms of assembly, part of the 30S ribosomal subunit. Forms a tight heterodimer with protein bS6.

Binds as a heterodimer with protein bS6 to the central domain of the 16S rRNA, where it helps stabilize the platform of the 30S subunit. The sequence is that of Small ribosomal subunit protein bS18A from Mycolicibacterium paratuberculosis (strain ATCC BAA-968 / K-10) (Mycobacterium paratuberculosis).